Consider the following 365-residue polypeptide: IgG receptor FcRn large subunit p51 (365 aa).

Positions 1 to 21 are cleaved as a signal peptide; the sequence is MGMPLPWALSLLLVLLPQTWG. The alpha-1 stretch occupies residues 22-110; sequence SETRPPLMYH…KTLEKILNGT (89 aa). Residues 22–297 are Extracellular-facing; the sequence is SETRPPLMYH…VDLDSSARSS (276 aa). Asparagine 108, asparagine 125, asparagine 149, and asparagine 246 each carry an N-linked (GlcNAc...) asparagine glycan. The segment at 111–200 is alpha-2; sequence YTLQGLLGCE…ERGRRNLEWK (90 aa). Cystine bridges form between cysteine 119/cysteine 182 and cysteine 221/cysteine 275. An alpha-3 region spans residues 201–290; it reads EPPSMRLKAR…GLAQPLTVDL (90 aa). In terms of domain architecture, Ig-like C1-type spans 202–289; the sequence is PPSMRLKARP…EGLAQPLTVD (88 aa). Residues 291 to 297 form a connecting peptide region; it reads DSSARSS. A helical transmembrane segment spans residues 298 to 321; that stretch reads VPVVGIVLGLLLVVVAIAGGVLLW. Topologically, residues 322 to 365 are cytoplasmic; it reads GRMRSGLPAPWLSLSGDDSGDLLPGGNLPPEAEPQGANAFPATS. Position 334 is a phosphoserine (serine 334). The interval 343-365 is disordered; it reads LLPGGNLPPEAEPQGANAFPATS.

The protein belongs to the immunoglobulin superfamily. In terms of assembly, fcRn complex consists of two subunits: p51, and p14 which is equivalent to beta-2-microglobulin. It forms an MHC class I-like heterodimer. Interacts with albumin/ALB; this interaction regulates ALB homeostasis. As to expression, intestinal epithelium of suckling rodents. Expressed in neonatal intestine and fetal yolk sac.

It is found in the cell membrane. Its subcellular location is the endosome membrane. In terms of biological role, cell surface receptor that transfers passive humoral immunity from the mother to the newborn. Binds to the Fc region of monomeric immunoglobulin gamma and mediates its selective uptake from milk. IgG in the milk is bound at the apical surface of the intestinal epithelium. The resultant FcRn-IgG complexes are transcytosed across the intestinal epithelium and IgG is released from FcRn into blood or tissue fluids. Throughout life, contributes to effective humoral immunity by recycling IgG and extending its half-life in the circulation. Mechanistically, monomeric IgG binding to FcRn in acidic endosomes of endothelial and hematopoietic cells recycles IgG to the cell surface where it is released into the circulation. In addition of IgG, regulates homeostasis of the other most abundant circulating protein albumin/ALB. The protein is IgG receptor FcRn large subunit p51 (Fcgrt) of Mus musculus (Mouse).